A 202-amino-acid chain; its full sequence is Putative transmembrane protein ORF202 (202 aa).

5 helical membrane passes run 13 to 33 (AIAF…FHYI), 40 to 60 (VFYL…LFLG), 87 to 107 (YYPV…ISVF), 156 to 176 (YGAL…HSLS), and 177 to 197 (LTAF…DLWA).

It localises to the host membrane. The polypeptide is Putative transmembrane protein ORF202 (Acidianus filamentous virus 2 (isolate Italy/Pozzuoli) (AFV-2)).